Here is a 254-residue protein sequence, read N- to C-terminus: Nickel import ATP-binding protein NikD (254 aa).

The region spanning 2-241 (PQQIELRNIA…PKHAVTRSLV (240 aa)) is the ABC transporter domain. 36–43 (GGSGSGKS) is a binding site for ATP.

The protein belongs to the ABC transporter superfamily. Nickel importer (TC 3.A.1.5.3) family. In terms of assembly, the complex is composed of two ATP-binding proteins (NikD and NikE), two transmembrane proteins (NikB and NikC) and a solute-binding protein (NikA).

The protein localises to the cell inner membrane. It catalyses the reaction Ni(2+)(out) + ATP + H2O = Ni(2+)(in) + ADP + phosphate + H(+). Its function is as follows. Part of the ABC transporter complex NikABCDE involved in nickel import. Responsible for energy coupling to the transport system. The chain is Nickel import ATP-binding protein NikD from Escherichia coli O157:H7.